A 416-amino-acid polypeptide reads, in one-letter code: UDP-N-acetylmuramoylalanine--D-glutamate ligase (416 aa).

Gly-104–Thr-110 contacts ATP.

The protein belongs to the MurCDEF family.

It localises to the cytoplasm. It catalyses the reaction UDP-N-acetyl-alpha-D-muramoyl-L-alanine + D-glutamate + ATP = UDP-N-acetyl-alpha-D-muramoyl-L-alanyl-D-glutamate + ADP + phosphate + H(+). It participates in cell wall biogenesis; peptidoglycan biosynthesis. Its function is as follows. Cell wall formation. Catalyzes the addition of glutamate to the nucleotide precursor UDP-N-acetylmuramoyl-L-alanine (UMA). This Francisella tularensis subsp. tularensis (strain FSC 198) protein is UDP-N-acetylmuramoylalanine--D-glutamate ligase.